The sequence spans 571 residues: Proline--tRNA ligase (571 aa).

The protein belongs to the class-II aminoacyl-tRNA synthetase family. ProS type 1 subfamily. Homodimer.

It is found in the cytoplasm. The enzyme catalyses tRNA(Pro) + L-proline + ATP = L-prolyl-tRNA(Pro) + AMP + diphosphate. Functionally, catalyzes the attachment of proline to tRNA(Pro) in a two-step reaction: proline is first activated by ATP to form Pro-AMP and then transferred to the acceptor end of tRNA(Pro). As ProRS can inadvertently accommodate and process non-cognate amino acids such as alanine and cysteine, to avoid such errors it has two additional distinct editing activities against alanine. One activity is designated as 'pretransfer' editing and involves the tRNA(Pro)-independent hydrolysis of activated Ala-AMP. The other activity is designated 'posttransfer' editing and involves deacylation of mischarged Ala-tRNA(Pro). The misacylated Cys-tRNA(Pro) is not edited by ProRS. In Proteus mirabilis (strain HI4320), this protein is Proline--tRNA ligase.